The sequence spans 224 residues: tRNA pseudouridine synthase B (224 aa).

Catalysis depends on aspartate 46, which acts as the Nucleophile.

The protein belongs to the pseudouridine synthase TruB family. Type 1 subfamily.

It catalyses the reaction uridine(55) in tRNA = pseudouridine(55) in tRNA. Functionally, responsible for synthesis of pseudouridine from uracil-55 in the psi GC loop of transfer RNAs. In Methylococcus capsulatus (strain ATCC 33009 / NCIMB 11132 / Bath), this protein is tRNA pseudouridine synthase B.